A 171-amino-acid polypeptide reads, in one-letter code: 3-hydroxydecanoyl-[acyl-carrier-protein] dehydratase (171 aa).

Residue histidine 70 is part of the active site.

It belongs to the thioester dehydratase family. FabA subfamily. Homodimer.

The protein localises to the cytoplasm. It carries out the reaction a (3R)-hydroxyacyl-[ACP] = a (2E)-enoyl-[ACP] + H2O. The enzyme catalyses (3R)-hydroxydecanoyl-[ACP] = (2E)-decenoyl-[ACP] + H2O. It catalyses the reaction (2E)-decenoyl-[ACP] = (3Z)-decenoyl-[ACP]. The protein operates within lipid metabolism; fatty acid biosynthesis. Functionally, necessary for the introduction of cis unsaturation into fatty acids. Catalyzes the dehydration of (3R)-3-hydroxydecanoyl-ACP to E-(2)-decenoyl-ACP and then its isomerization to Z-(3)-decenoyl-ACP. Can catalyze the dehydratase reaction for beta-hydroxyacyl-ACPs with saturated chain lengths up to 16:0, being most active on intermediate chain length. This is 3-hydroxydecanoyl-[acyl-carrier-protein] dehydratase from Shewanella sp. (strain MR-4).